A 947-amino-acid polypeptide reads, in one-letter code: Zinc finger CCCH domain-containing protein 18 (947 aa).

At M1 the chain carries N-acetylmethionine. 3 disordered regions span residues 1–218, 275–295, and 387–921; these read MDVA…PRPT, GGPV…TESA, and YTEA…TLSR. S6, S32, S44, S57, S63, S70, S74, S79, and S91 each carry phosphoserine. Residues 73-85 are compositionally biased toward basic and acidic residues; that stretch reads KSQDQDSEAHELS. The span at 94–104 shows a compositional bias: acidic residues; it reads EEGDDAEEDGT. Residue T104 is modified to Phosphothreonine. Phosphoserine occurs at positions 105 and 113. The segment covering 105–119 has biased composition (basic and acidic residues); it reads SDLRDEASSVTRELD. 2 stretches are compositionally biased toward acidic residues: residues 120 to 131 and 138 to 153; these read EHELDYDEEVPE and QEEE…EEEK. Residues 160 to 185 show a composition bias toward basic and acidic residues; that stretch reads EEGKPDVQSVGEKEPTEAAKEKKKED. At S168 the chain carries Phosphoserine. The segment covering 186–202 has biased composition (acidic residues); that stretch reads DDGEIDDGEIDDDDLEE. The span at 203 to 212 shows a compositional bias: basic and acidic residues; sequence GEVKDPSDRK. Residues 214 to 240 form a C3H1-type zinc finger; the sequence is RPRPTCRFFMKGNCTWGMNCRFIHPGV. A compositionally biased stretch (basic and acidic residues) spans 391-479; the sequence is EPYHNYRDRE…DRDKDKEKPK (89 aa). S482 bears the Phosphoserine mark. A Glycyl lysine isopeptide (Lys-Gly) (interchain with G-Cter in SUMO2) cross-link involves residue K505. The span at 505-515 shows a compositional bias: basic and acidic residues; the sequence is KRADEWKDPWR. Phosphoserine occurs at positions 527, 529, and 531. Over residues 540–601 the composition is skewed to low complexity; sequence SASSASASNS…SRSRSFSSSP (62 aa). Over residues 602–611 the composition is skewed to pro residues; the sequence is SPSPTPSPHR. Glycyl lysine isopeptide (Lys-Gly) (interchain with G-Cter in SUMO2) cross-links involve residues K617 and K656. Over residues 656 to 665 the composition is skewed to basic and acidic residues; the sequence is KPGDLREARR. 2 stretches are compositionally biased toward low complexity: residues 687-720 and 731-745; these read GSSY…SVHS and ASPV…PTPA. Residues 755–769 are compositionally biased toward basic and acidic residues; it reads KKEDGVREEKRKRDP. The segment covering 773 to 804 has biased composition (low complexity); it reads PPKSSKAPAGGKASQQAAAPQQAAPGQPQQGS. N6-acetyllysine is present on K809. A Glycyl lysine isopeptide (Lys-Gly) (interchain with G-Cter in SUMO2) cross-link involves residue K812. Positions 819–836 are enriched in basic and acidic residues; sequence AAEKGSRKRYEPSDKDRQ. Residues S837, S846, S862, S887, and S890 each carry the phosphoserine modification. Residues 887-918 are compositionally biased toward low complexity; it reads SPQSKSSSKVTSVPGKATDTATAGTKSGKAST. A Glycyl lysine isopeptide (Lys-Gly) (interchain with G-Cter in SUMO2) cross-link involves residue K902. A coiled-coil region spans residues 915–944; sequence KASTLSRREELLKQLKAVEDAIARKRAKIP.

In terms of assembly, interacts with ZFC3H1 in a RNase-insensitive manner.

It localises to the nucleus. This Rattus norvegicus (Rat) protein is Zinc finger CCCH domain-containing protein 18 (Zc3h18).